The sequence spans 374 residues: Cell division protein DivIB (374 aa).

Residues 1-90 (MWKISNENDI…EEEHFADRLP (90 aa)) are disordered. At 1–103 (MWKISNENDI…KTRNKRLYRR (103 aa)) the chain is on the cytoplasmic side. Residues 39–53 (YLKKQAEEAASKGEN) show a composition bias toward basic and acidic residues. Over residues 56–75 (AEVTITLQEQSQEEPQQHLP) the composition is skewed to polar residues. The helical transmembrane segment at 104-124 (LAFILTCLGTAILVALYFVSP) threads the bilayer. Topologically, residues 125-374 (LSRLSEVTVS…GENQEVQQAE (250 aa)) are extracellular. Positions 126-197 (SRLSEVTVSG…NSFKIDIQEY (72 aa)) constitute a POTRA domain. Residues 325–374 (KESEETGSEVSEDSAVENQEVVDPNAGVATDGANNGTPTNGENQEVQQAE) form a disordered region. Acidic residues predominate over residues 326–339 (ESEETGSEVSEDSA). Over residues 356-374 (GANNGTPTNGENQEVQQAE) the composition is skewed to polar residues.

This sequence belongs to the FtsQ/DivIB family. DivIB subfamily.

It is found in the cell membrane. In terms of biological role, cell division protein that may be involved in stabilizing or promoting the assembly of the division complex. In Enterococcus faecalis (strain 62), this protein is Cell division protein DivIB.